The chain runs to 507 residues: Carboxypeptidase sxa2 (507 aa).

An N-terminal signal peptide occupies residues 1–22 (MLSLFLKSLFAIIIIELTIIHA). 2 N-linked (GlcNAc...) asparagine glycosylation sites follow: Asn-38 and Asn-45. The interval 41–64 (SASSNQTVQPRQHAAPSSDRIKSL) is disordered. Ser-200 is a catalytic residue. 3 N-linked (GlcNAc...) asparagine glycosylation sites follow: Asn-259, Asn-260, and Asn-300. Asp-434 is an active-site residue. N-linked (GlcNAc...) asparagine glycosylation is present at Asn-448. His-487 is a catalytic residue.

Belongs to the peptidase S10 family.

It is found in the secreted. Its function is as follows. Involved in degradation or processing of the mating pheromones. Its loss causes a persistent response to the pheromones. It may be required for stabilization of enzymes that are essential for zygote formation. May degrade the mating pheromone P-factor. This is Carboxypeptidase sxa2 (sxa2) from Schizosaccharomyces pombe (strain 972 / ATCC 24843) (Fission yeast).